A 266-amino-acid polypeptide reads, in one-letter code: Ribonuclease 3 (266 aa).

The region spanning 8–130 (LARLTKKLGY…IIGAVYLDSN (123 aa)) is the RNase III domain. Glu-43 contributes to the Mg(2+) binding site. Asp-47 is an active-site residue. Mg(2+) contacts are provided by Asp-116 and Glu-119. Glu-119 is a catalytic residue. The region spanning 157–227 (DPKTRLQEFL…AQQILALIEK (71 aa)) is the DRBM domain. The segment at 229–266 (REQEKEVKIKPTKQAKLANPRHTKSNPSSSSKKSSTRK) is disordered. The segment covering 253–266 (SNPSSSSKKSSTRK) has biased composition (low complexity).

The protein belongs to the ribonuclease III family. As to quaternary structure, homodimer. It depends on Mg(2+) as a cofactor.

The protein resides in the cytoplasm. It carries out the reaction Endonucleolytic cleavage to 5'-phosphomonoester.. Digests double-stranded RNA. Involved in the processing of primary rRNA transcript to yield the immediate precursors to the large and small rRNAs (23S and 16S). Processes some mRNAs, and tRNAs when they are encoded in the rRNA operon. Processes pre-crRNA and tracrRNA of type II CRISPR loci if present in the organism. In Colwellia psychrerythraea (strain 34H / ATCC BAA-681) (Vibrio psychroerythus), this protein is Ribonuclease 3.